Reading from the N-terminus, the 72-residue chain is Gas vesicle protein A (72 aa).

This sequence belongs to the gas vesicle GvpA family. The gas vesicle shell is 2 nm thick and consists of a single layer of this protein. It forms helical ribs nearly perpendicular to the long axis of the vesicle.

Its subcellular location is the gas vesicle shell. Gas vesicles are hollow, gas filled proteinaceous nanostructures found in some microorganisms. During planktonic growth they allow positioning of the organism at a favorable depth for light or nutrient acquisition. GvpA forms the protein shell. In Haloquadratum walsbyi (strain DSM 16790 / HBSQ001), this protein is Gas vesicle protein A.